A 151-amino-acid polypeptide reads, in one-letter code: NADPH-dependent 7-cyano-7-deazaguanine reductase (151 aa).

The Thioimide intermediate role is filled by cysteine 51. Residue aspartate 58 is the Proton donor of the active site. Residues 73–75 and 92–93 each bind substrate; these read VES and HE.

It belongs to the GTP cyclohydrolase I family. QueF type 1 subfamily.

The protein localises to the cytoplasm. The catalysed reaction is 7-aminomethyl-7-carbaguanine + 2 NADP(+) = 7-cyano-7-deazaguanine + 2 NADPH + 3 H(+). Its pathway is tRNA modification; tRNA-queuosine biosynthesis. In terms of biological role, catalyzes the NADPH-dependent reduction of 7-cyano-7-deazaguanine (preQ0) to 7-aminomethyl-7-deazaguanine (preQ1). The sequence is that of NADPH-dependent 7-cyano-7-deazaguanine reductase from Bacteroides thetaiotaomicron (strain ATCC 29148 / DSM 2079 / JCM 5827 / CCUG 10774 / NCTC 10582 / VPI-5482 / E50).